The following is a 213-amino-acid chain: Adenylate kinase (213 aa).

10–15 contacts ATP; it reads GAGKGT. The interval 30–59 is NMP; that stretch reads STGDMLRAALKEGTPLGLEAKKYMDQGALV. AMP contacts are provided by residues Thr-31, Arg-36, 57-59, 85-88, and Gln-92; these read ALV and GFPR. The LID stretch occupies residues 126-163; sequence GRRTCRSCGAGFHVMFDPPKTDGKCDKCGGELYQRDDD. An ATP-binding site is contributed by Arg-127. Positions 130, 133, 150, and 153 each coordinate Zn(2+). AMP-binding residues include Arg-160 and Arg-171. Position 199 (Gly-199) interacts with ATP.

This sequence belongs to the adenylate kinase family. Monomer.

The protein resides in the cytoplasm. The enzyme catalyses AMP + ATP = 2 ADP. It functions in the pathway purine metabolism; AMP biosynthesis via salvage pathway; AMP from ADP: step 1/1. Its function is as follows. Catalyzes the reversible transfer of the terminal phosphate group between ATP and AMP. Plays an important role in cellular energy homeostasis and in adenine nucleotide metabolism. This is Adenylate kinase from Syntrophobacter fumaroxidans (strain DSM 10017 / MPOB).